The primary structure comprises 335 residues: Tetraacyldisaccharide 4'-kinase (335 aa).

59–66 contacts ATP; sequence TAGGNGKT.

The protein belongs to the LpxK family.

The enzyme catalyses a lipid A disaccharide + ATP = a lipid IVA + ADP + H(+). It functions in the pathway glycolipid biosynthesis; lipid IV(A) biosynthesis; lipid IV(A) from (3R)-3-hydroxytetradecanoyl-[acyl-carrier-protein] and UDP-N-acetyl-alpha-D-glucosamine: step 6/6. In terms of biological role, transfers the gamma-phosphate of ATP to the 4'-position of a tetraacyldisaccharide 1-phosphate intermediate (termed DS-1-P) to form tetraacyldisaccharide 1,4'-bis-phosphate (lipid IVA). In Vibrio vulnificus (strain YJ016), this protein is Tetraacyldisaccharide 4'-kinase.